The primary structure comprises 335 residues: Transcription factor E2F5 (335 aa).

Over residues 1 to 18 the composition is skewed to low complexity; the sequence is MAAAEPTSSAQPTPQAQA. The disordered stretch occupies residues 1–40; the sequence is MAAAEPTSSAQPTPQAQAQPPPHGAPSSQPSAALAGGSSR. Residues 37–108 mediate DNA binding; that stretch reads GSSRHEKSLG…KNSIQWKGVG (72 aa). The tract at residues 66 to 88 is leucine-zipper; sequence LKAAADTLAVRQKRRIYDITNVL. Positions 71–108 match the DEF box motif; it reads DTLAVRQKRRIYDITNVLEGIDLIEKKSKNSIQWKGVG. Residues 109–205 form a dimerization region; sequence AGCNTKEVID…GQNGQKKYQI (97 aa). A disordered region spans residues 226–285; that stretch reads SKPVVFPVPPPDDLTQPSSQSSTSVTPQKSTMAAQNLPEQHVSERSQTFQQTPAAEVSSG. Low complexity predominate over residues 238 to 256; sequence DLTQPSSQSSTSVTPQKST. Positions 277–335 are transactivation; sequence TPAAEVSSGSISGDIIDELMSSDVFPLLRLSPTPADDYNFNLDDNEGVCDLFDVQILNY. Residues 312–329 are RBL2 association; the sequence is DDYNFNLDDNEGVCDLFD.

Belongs to the E2F/DP family. Component of the DRTF1/E2F transcription factor complex. Binds cooperatively with DP-1 to E2F sites. Interaction with retinoblastoma protein RB1 or proteins RBL1 and RBL2 inhibits the E2F transactivation domain. Component of the DREAM complex (also named LINC complex) at least composed of E2F4, E2F5, LIN9, LIN37, LIN52, LIN54, MYBL1, MYBL2, RBL1, RBL2, RBBP4, TFDP1 and TFDP2. The complex exists in quiescent cells where it represses cell cycle-dependent genes. It dissociates in S phase when LIN9, LIN37, LIN52 and LIN54 form a subcomplex that binds to MYBL2.

It is found in the nucleus. Functionally, transcriptional activator that binds to E2F sites, these sites are present in the promoter of many genes whose products are involved in cell proliferation. May mediate growth factor-initiated signal transduction. It is likely involved in the early responses of resting cells to growth factor stimulation. Specifically required for multiciliate cell differentiation: together with MCIDAS and E2F5, binds and activate genes required for centriole biogenesis. The sequence is that of Transcription factor E2F5 (E2f5) from Mus musculus (Mouse).